The sequence spans 65 residues: UPF0434 protein Rpal_0270 (65 aa).

Belongs to the UPF0434 family.

In Rhodopseudomonas palustris (strain TIE-1), this protein is UPF0434 protein Rpal_0270.